Reading from the N-terminus, the 271-residue chain is ATP synthase subunit a (271 aa).

5 consecutive transmembrane segments (helical) span residues 38–58, 100–120, 146–166, 220–240, and 242–262; these read FWTL…LFLL, LIAP…LMDL, DVNI…FYSI, LIFI…LNVP, and AIFH…LTIV.

Belongs to the ATPase A chain family. In terms of assembly, F-type ATPases have 2 components, CF(1) - the catalytic core - and CF(0) - the membrane proton channel. CF(1) has five subunits: alpha(3), beta(3), gamma(1), delta(1), epsilon(1). CF(0) has three main subunits: a(1), b(2) and c(9-12). The alpha and beta chains form an alternating ring which encloses part of the gamma chain. CF(1) is attached to CF(0) by a central stalk formed by the gamma and epsilon chains, while a peripheral stalk is formed by the delta and b chains.

It localises to the cell inner membrane. In terms of biological role, key component of the proton channel; it plays a direct role in the translocation of protons across the membrane. The polypeptide is ATP synthase subunit a (Citrobacter koseri (strain ATCC BAA-895 / CDC 4225-83 / SGSC4696)).